A 103-amino-acid polypeptide reads, in one-letter code: Ig lambda chain C region (103 aa).

The Ig-like domain maps to 6-99 (PTITLFPPSK…NGTSITKTLK (94 aa)). Cys28 and Cys85 are oxidised to a cystine.

In Gallus gallus (Chicken), this protein is Ig lambda chain C region.